The following is a 103-amino-acid chain: Integration host factor subunit alpha (103 aa).

The segment at 51–73 is disordered; the sequence is FGNFQLRDKPQRPGRNPKTGEEI.

The protein belongs to the bacterial histone-like protein family. Heterodimer of an alpha and a beta chain.

Its function is as follows. This protein is one of the two subunits of integration host factor, a specific DNA-binding protein that functions in genetic recombination as well as in transcriptional and translational control. The chain is Integration host factor subunit alpha from Azoarcus sp. (strain BH72).